A 190-amino-acid chain; its full sequence is GTP cyclohydrolase 1 (190 aa).

Cys-75, His-78, and Cys-146 together coordinate Zn(2+).

It belongs to the GTP cyclohydrolase I family. Toroid-shaped homodecamer, composed of two pentamers of five dimers.

It carries out the reaction GTP + H2O = 7,8-dihydroneopterin 3'-triphosphate + formate + H(+). The protein operates within cofactor biosynthesis; 7,8-dihydroneopterin triphosphate biosynthesis; 7,8-dihydroneopterin triphosphate from GTP: step 1/1. The protein is GTP cyclohydrolase 1 of Campylobacter jejuni subsp. doylei (strain ATCC BAA-1458 / RM4099 / 269.97).